The primary structure comprises 277 residues: Inositol monophosphatase 1 (277 aa).

Glu-70, Asp-90, Ile-92, and Asp-93 together coordinate Mg(2+). Glu-70 lines the substrate pocket. 92-95 provides a ligand contact to substrate; the sequence is IDGT. A Phosphothreonine modification is found at Thr-168. Substrate-binding positions include 194–196, Glu-213, and Asp-220; that span reads GTA. Residue Asp-220 coordinates Mg(2+).

This sequence belongs to the inositol monophosphatase superfamily. Homodimer. Mg(2+) is required as a cofactor.

Its subcellular location is the cytoplasm. It catalyses the reaction a myo-inositol phosphate + H2O = myo-inositol + phosphate. The enzyme catalyses 1D-myo-inositol 1-phosphate + H2O = myo-inositol + phosphate. It carries out the reaction 1D-myo-inositol 2-phosphate + H2O = myo-inositol + phosphate. The catalysed reaction is 1D-myo-inositol 3-phosphate + H2O = myo-inositol + phosphate. It catalyses the reaction 1D-myo-inositol 4-phosphate + H2O = myo-inositol + phosphate. The enzyme catalyses 1D-myo-inositol 5-phosphate + H2O = myo-inositol + phosphate. It carries out the reaction 1D-myo-inositol 6-phosphate + H2O = myo-inositol + phosphate. The catalysed reaction is scyllo-inositol 1-phosphate + H2O = scyllo-inositol + phosphate. It catalyses the reaction alpha-D-galactose 1-phosphate + H2O = D-galactose + phosphate. The enzyme catalyses alpha-D-glucose 1-phosphate + H2O = D-glucose + phosphate. It carries out the reaction D-glucose 6-phosphate + H2O = D-glucose + phosphate. The catalysed reaction is beta-D-fructose 1-phosphate + H2O = D-fructose + phosphate. It catalyses the reaction glycerol 2-phosphate + H2O = glycerol + phosphate. The enzyme catalyses adenosine 2'-phosphate + H2O = adenosine + phosphate. It participates in polyol metabolism; myo-inositol biosynthesis; myo-inositol from D-glucose 6-phosphate: step 2/2. With respect to regulation, activity with myo-inositol monophosphates and D-galactose 1-phosphate is inhibited by Li(+), Ca(2+) and Mn(2+), but also by Mg(2+) at concentrations above 3 mM. Its function is as follows. Phosphatase involved in the dephosphorylation of myo-inositol monophosphates to generate myo-inositol. Is also able to dephosphorylate scyllo-inositol-phosphate, myo-inositol 1,4-diphosphate, scyllo-inositol-1,3-diphosphate and scyllo-inositol-1,4-diphosphate. Also dephosphorylates in vitro other sugar-phosphates including D-galactose-1-phosphate, glucose-1-phosphate, glucose-6-phosphate, fructose-1-phosphate, beta-glycerophosphate and 2'-AMP. Responsible for the provision of inositol required for synthesis of phosphatidylinositols and polyphosphoinositides, and involved in maintaining normal brain function. Has been implicated as the pharmacological target for lithium (Li(+)) action in brain, which is used to treat bipolar affective disorder. Is equally active with 1D-myo-inositol 1-phosphate, 1D-myo-inositol 3-phosphate and D-galactose 1-phosphate. The chain is Inositol monophosphatase 1 from Homo sapiens (Human).